The following is a 1969-amino-acid chain: TP53-binding protein 1 (1969 aa).

The interval 1-24 (MPGEQMDPTGSQLDSDFSQQDTPC) is disordered. A compositionally biased stretch (polar residues) spans 8 to 22 (PTGSQLDSDFSQQDT). 3 positions are modified to phosphoserine: Ser-30, Ser-68, and Ser-73. A disordered region spans residues 67–168 (VSNPEQSAVE…DSLAAEDSAS (102 aa)). The span at 69 to 85 (NPEQSAVEQGDSNSSFN) shows a compositional bias: polar residues. The segment covering 86–95 (EHLKEKKASD) has biased composition (basic and acidic residues). Positions 101–110 (HLGTSGSISQ) are enriched in polar residues. Residue Ser-109 is modified to Phosphoserine. Residues 135–148 (PEEEKEEEELEEEK) are compositionally biased toward acidic residues. Over residues 158 to 168 (ADSLAAEDSAS) the composition is skewed to low complexity. A phosphoserine mark is found at Ser-169, Ser-179, and Ser-181. Residue Lys-220 forms a Glycyl lysine isopeptide (Lys-Gly) (interchain with G-Cter in SUMO1); alternate linkage. Lys-220 participates in a covalent cross-link: Glycyl lysine isopeptide (Lys-Gly) (interchain with G-Cter in SUMO2); alternate. Disordered regions lie at residues 254–337 (EQNL…VSTP), 352–599 (LVQE…CKGR), and 614–707 (DSGS…CPEA). Residues Ser-267 and Ser-268 each carry the phosphoserine modification. Over residues 277-288 (ETKEQVPARELL) the composition is skewed to basic and acidic residues. The span at 294–324 (VQPSSEPEVSSTQEDLFDQSSKTASDGCSTP) shows a compositional bias: polar residues. Ser-297 bears the Phosphoserine mark. Thr-305 bears the Phosphothreonine mark. A phosphoserine mark is found at Ser-368, Ser-382, and Ser-397. The segment covering 407 to 419 (QKLHDDEAMETEK) has biased composition (basic and acidic residues). The span at 426 to 442 (PAVSPQASTPVSRSTPV) shows a compositional bias: polar residues. Ser-429, Ser-452, and Ser-464 each carry phosphoserine. The segment covering 481–490 (HSSSLTVECS) has biased composition (polar residues). Positions 491–501 (KTSESEPKNFT) are enriched in basic and acidic residues. Ser-507, Ser-518, Ser-523, and Ser-525 each carry phosphoserine. Over residues 517-528 (LSTSEYSQSSKM) the composition is skewed to polar residues. Residues Thr-543 and Thr-548 each carry the phosphothreonine modification. Ser-552 and Ser-579 each carry phosphoserine. A compositionally biased stretch (polar residues) spans 566–582 (VLVTPSQDDQVEMSQNV). The segment covering 583–599 (DKAKEDETEDRGDCKGR) has biased composition (basic and acidic residues). Residues 614 to 634 (DSGSQAVPSPATRSEALSSVL) are compositionally biased toward polar residues. Phosphoserine occurs at positions 622, 627, 631, and 632. Over residues 640–649 (MDTKEHHPEE) the composition is skewed to basic and acidic residues. Position 662 is a phosphothreonine (Thr-662). The span at 666–675 (SHREEPKEEP) shows a compositional bias: basic and acidic residues. A phosphoserine mark is found at Ser-684, Ser-716, Ser-719, and Ser-763. Residues 754–870 (KEPSPRADVS…DDKQLGPEGA (117 aa)) are disordered. Residues 790 to 818 (AENRLDTPEEKRIECDGDSKAETTEKDAV) show a composition bias toward basic and acidic residues. Ser-822 is modified (phosphoserine). Residues 830–839 (VRDEPVRPDQ) are compositionally biased toward basic and acidic residues. At Thr-912 the chain carries Phosphothreonine. Residue Lys-920 forms a Glycyl lysine isopeptide (Lys-Gly) (interchain with G-Cter in SUMO2) linkage. Residues 927-1017 (STPIGISNYP…GSTAIAEPVA (91 aa)) are disordered. Positions 935-949 (YPESTIATSDVTSES) are enriched in polar residues. Residues 961–975 (EKGDSESAPEMDGKL) are compositionally biased toward basic and acidic residues. Ser-965 bears the Phosphoserine mark. Lys-974 is covalently cross-linked (Glycyl lysine isopeptide (Lys-Gly) (interchain with G-Cter in SUMO2)). Ser-1018 carries the phosphoserine modification. Disordered regions lie at residues 1034 to 1144 (QEKE…MDRP), 1178 to 1231 (GTST…PHGH), and 1267 to 1478 (TEET…DSSS). The span at 1060 to 1074 (EEDKERPDVTPKLRQ) shows a compositional bias: basic and acidic residues. Ser-1075 and Ser-1096 each carry phosphoserine. Residues 1099 to 1112 (SQQRASQEQRASQE) are compositionally biased toward low complexity. Residue Ser-1115 is modified to Phosphoserine. Residues 1178-1197 (GTSTAEQNSGKQDATVQTER) show a composition bias toward polar residues. Position 1211 is a phosphothreonine (Thr-1211). 2 positions are modified to phosphoserine: Ser-1213 and Ser-1216. Over residues 1269–1282 (ETEEPIVECQECET) the composition is skewed to acidic residues. A compositionally biased stretch (low complexity) spans 1295-1326 (DLGDISSFSSKASSSHHTSSGTSLSAIHSSGS). Residue Ser-1314 is modified to Phosphoserine. The residue at position 1329 (Arg-1329) is an Omega-N-methylarginine. The residue at position 1339 (Ser-1339) is a Phosphoserine. The residue at position 1352 (Arg-1352) is an Omega-N-methylarginine. At Ser-1359 the chain carries Phosphoserine. Lys-1362 participates in a covalent cross-link: Glycyl lysine isopeptide (Lys-Gly) (interchain with G-Cter in SUMO2). A Phosphoserine modification is found at Ser-1365. Residues 1393 to 1400 (RGRGRRGR) carry the GAR motif. A phosphoserine mark is found at Ser-1423 and Ser-1427. A Glycyl lysine isopeptide (Lys-Gly) (interchain with G-Cter in SUMO1); alternate cross-link involves residue Lys-1431. Lys-1431 participates in a covalent cross-link: Glycyl lysine isopeptide (Lys-Gly) (interchain with G-Cter in SUMO2); alternate. Phosphoserine is present on residues Ser-1457, Ser-1459, Ser-1470, and Ser-1471. The span at 1469–1478 (GSSDGLDSSS) shows a compositional bias: low complexity. The tudor-like stretch occupies residues 1481–1600 (NSFVGLRVVA…NRLREQYGLG (120 aa)). Positions 1492–1520 (WSSNGYFYSGKITRDVGAGKYKLLFDDGY) are interaction with dimethylated histone H4. Lys-1560 is covalently cross-linked (Glycyl lysine isopeptide (Lys-Gly) (interchain with G-Cter in SUMO1); alternate). Residue Lys-1560 forms a Glycyl lysine isopeptide (Lys-Gly) (interchain with G-Cter in SUMO2); alternate linkage. A UDR motif is present at residues 1601-1628 (PYEAVTPLTKAADISLDNLVEGKRKRRS). Thr-1606 bears the Phosphothreonine mark. 3 positions are modified to phosphoserine: Ser-1615, Ser-1628, and Ser-1632. The disordered stretch occupies residues 1624-1715 (RKRRSNISSP…IGEPSVLEEP (92 aa)). The segment covering 1631–1648 (SSPVTPTAASSSSTTPTR) has biased composition (low complexity). A phosphothreonine mark is found at Thr-1635 and Thr-1645. Phosphoserine occurs at positions 1653, 1670, and 1675. Residue Lys-1682 forms a Glycyl lysine isopeptide (Lys-Gly) (interchain with G-Cter in ubiquitin) linkage. Residues Ser-1698 and Ser-1756 each carry the phosphoserine modification. 2 consecutive BRCT domains span residues 1749 to 1845 (LDGP…NYLL) and 1861 to 1961 (PREN…QHPK).

In terms of assembly, homoligomer. Interacts with p53/TP53 (via the central domain). Interacts with DCLRE1C. Interacts with histone H2AX and this requires phosphorylation of H2AX on 'Ser-139'. Interacts with histone H4 that has been dimethylated at 'Lys-20' (H4K20me2). Has low affinity for histone H4 containing monomethylated 'Lys-20' (H4K20me1). Does not bind histone H4 containing unmethylated or trimethylated 'Lys-20' (H4K20me3). Has low affinity for histone H3 that has been dimethylated on 'Lys-79'. Has very low affinity for histone H3 that has been monomethylated on 'Lys-79' (in vitro). Does not bind unmethylated histone H3. Interacts with histone H2A monoubiquitinated at 'Lys-15' (H2AK15Ub). Interacts with PWWP3A/EXPAND1. Interacts with CHEK2; modulates CHEK2 phosphorylation at 'Thr-68' in response to infrared. Interacts with MSL1; this interaction may be required for MSL1 DNA repair activity, but not for histone acetyltransferase activity. Interacts (when phosphorylated by ATM) with RIF1. Interacts (via the Tudor-like domain) with NUDT16L1/TIRR; interaction masks the Tudor-like domain and prevents recruitment to chromatin. Interacts with PAXIP1. Interacts with IFI202A. Interacts with SHLD2. Interacts (when phosphorylated) with TOPBP1. Interacts with GFI1; promoting methylation by PRMT1. Interacts with (phosphorylated) DYNLL1; specifically binds DYNLL1 phosphorylated at 'Ser-88' and promotes its recruitment to double stand breaks (DSBs). Post-translationally, phosphorylated at basal level in the absence of DNA damage. Phosphorylated by ATM in response to DNA damage: phosphorylation at different sites promotes interaction with different set of proteins: phosphorylation at the N-terminus by ATM (residues from 11-181) promotes interaction with PAXIP1 and non-homologous end joining (NHEJ) of dysfunctional telomeres. Phosphorylation by ATM at residues that are located more C-terminus (residues 300-650) leads to promote interaction with RIF1. Interaction with RIF1 leads to disrupt interaction with NUDT16L1/TIRR. Phosphorylation at Thr-1606 and Ser-1615 in the UDR motif blocks interaction with H2AK15ub. Dephosphorylated by PPP4C. Hyperphosphorylation during mitosis correlates with its exclusion from chromatin and DNA lesions. Hyperphosphorylated in an ATR-dependent manner in response to DNA damage induced by UV irradiation. Dephosphorylated by PPP5C. Phosphorylation at Ser-368 and Thr-662 promotes interaction with TOPBP1. Phosphorylated by VRK1. Asymmetrically dimethylated on Arg residues by PRMT1. Methylation is required for DNA binding. In terms of processing, monoubiquitinated at Lys-1682 by MSL2 is reponse to DNA damage, leading to its stabilization.

It localises to the nucleus. It is found in the chromosome. The protein resides in the centromere. The protein localises to the kinetochore. Its function is as follows. Double-strand break (DSB) repair protein involved in response to DNA damage, telomere dynamics and class-switch recombination (CSR) during antibody genesis. Plays a key role in the repair of double-strand DNA breaks (DSBs) in response to DNA damage by promoting non-homologous end joining (NHEJ)-mediated repair of DSBs and specifically counteracting the function of the homologous recombination (HR) repair protein BRCA1. In response to DSBs, phosphorylation by ATM promotes interaction with RIF1 and dissociation from NUDT16L1/TIRR, leading to recruitment to DSBs sites. Recruited to DSBs sites by recognizing and binding histone H2A monoubiquitinated at 'Lys-15' (H2AK15Ub) and histone H4 dimethylated at 'Lys-20' (H4K20me2), two histone marks that are present at DSBs sites. Required for immunoglobulin class-switch recombination (CSR) during antibody genesis, a process that involves the generation of DNA DSBs. Participates in the repair and the orientation of the broken DNA ends during CSR. In contrast, it is not required for classic NHEJ and V(D)J recombination. Promotes NHEJ of dysfunctional telomeres. The protein is TP53-binding protein 1 of Mus musculus (Mouse).